Here is a 436-residue protein sequence, read N- to C-terminus: Tol-Pal system protein TolB (436 aa).

The N-terminal stretch at 1–28 (MEMLRRNFFRLLMVLVAGCGLIASPANA) is a signal peptide.

It belongs to the TolB family. The Tol-Pal system is composed of five core proteins: the inner membrane proteins TolA, TolQ and TolR, the periplasmic protein TolB and the outer membrane protein Pal. They form a network linking the inner and outer membranes and the peptidoglycan layer.

It localises to the periplasm. In terms of biological role, part of the Tol-Pal system, which plays a role in outer membrane invagination during cell division and is important for maintaining outer membrane integrity. The polypeptide is Tol-Pal system protein TolB (Rhizobium meliloti (strain 1021) (Ensifer meliloti)).